A 354-amino-acid polypeptide reads, in one-letter code: GDSL esterase/lipase At3g09930 (354 aa).

A signal peptide spans 1–24 (MELPKLLISLFLFSFSSFFLGAES). Ser-46 functions as the Nucleophile in the catalytic mechanism. Asn-133, Asn-233, Asn-237, Asn-256, and Asn-300 each carry an N-linked (GlcNAc...) asparagine glycan. Residues Asp-329 and His-332 contribute to the active site.

This sequence belongs to the 'GDSL' lipolytic enzyme family.

It is found in the secreted. In Arabidopsis thaliana (Mouse-ear cress), this protein is GDSL esterase/lipase At3g09930.